Consider the following 126-residue polypeptide: Large ribosomal subunit protein bL20 (126 aa).

The span at 1-15 (MARVKRAVNAQKKRR) shows a compositional bias: basic residues. The interval 1-20 (MARVKRAVNAQKKRRTTLER) is disordered.

The protein belongs to the bacterial ribosomal protein bL20 family.

Its function is as follows. Binds directly to 23S ribosomal RNA and is necessary for the in vitro assembly process of the 50S ribosomal subunit. It is not involved in the protein synthesizing functions of that subunit. This Beutenbergia cavernae (strain ATCC BAA-8 / DSM 12333 / CCUG 43141 / JCM 11478 / NBRC 16432 / NCIMB 13614 / HKI 0122) protein is Large ribosomal subunit protein bL20.